Reading from the N-terminus, the 477-residue chain is Aspartyl/glutamyl-tRNA(Asn/Gln) amidotransferase subunit B (477 aa).

This sequence belongs to the GatB/GatE family. GatB subfamily. In terms of assembly, heterotrimer of A, B and C subunits.

It carries out the reaction L-glutamyl-tRNA(Gln) + L-glutamine + ATP + H2O = L-glutaminyl-tRNA(Gln) + L-glutamate + ADP + phosphate + H(+). It catalyses the reaction L-aspartyl-tRNA(Asn) + L-glutamine + ATP + H2O = L-asparaginyl-tRNA(Asn) + L-glutamate + ADP + phosphate + 2 H(+). In terms of biological role, allows the formation of correctly charged Asn-tRNA(Asn) or Gln-tRNA(Gln) through the transamidation of misacylated Asp-tRNA(Asn) or Glu-tRNA(Gln) in organisms which lack either or both of asparaginyl-tRNA or glutaminyl-tRNA synthetases. The reaction takes place in the presence of glutamine and ATP through an activated phospho-Asp-tRNA(Asn) or phospho-Glu-tRNA(Gln). The sequence is that of Aspartyl/glutamyl-tRNA(Asn/Gln) amidotransferase subunit B from Oenococcus oeni (strain ATCC BAA-331 / PSU-1).